We begin with the raw amino-acid sequence, 188 residues long: dTTP/UTP pyrophosphatase (188 aa).

The active-site Proton acceptor is D67.

The protein belongs to the Maf family. YhdE subfamily. A divalent metal cation is required as a cofactor.

It localises to the cytoplasm. It carries out the reaction dTTP + H2O = dTMP + diphosphate + H(+). It catalyses the reaction UTP + H2O = UMP + diphosphate + H(+). Nucleoside triphosphate pyrophosphatase that hydrolyzes dTTP and UTP. May have a dual role in cell division arrest and in preventing the incorporation of modified nucleotides into cellular nucleic acids. This is dTTP/UTP pyrophosphatase from Thermococcus kodakarensis (strain ATCC BAA-918 / JCM 12380 / KOD1) (Pyrococcus kodakaraensis (strain KOD1)).